The following is a 248-amino-acid chain: Probable transcriptional regulatory protein BBta_6910 (248 aa).

The protein belongs to the TACO1 family.

It is found in the cytoplasm. In Bradyrhizobium sp. (strain BTAi1 / ATCC BAA-1182), this protein is Probable transcriptional regulatory protein BBta_6910.